A 238-amino-acid chain; its full sequence is 3-dehydroquinate dehydratase (238 aa).

3-dehydroquinate-binding positions include 35-37 and Arg70; that span reads ELR. The active-site Proton donor/acceptor is His133. The active-site Schiff-base intermediate with substrate is the Lys160. Arg202 and Gln225 together coordinate 3-dehydroquinate.

This sequence belongs to the type-I 3-dehydroquinase family. Homodimer.

The catalysed reaction is 3-dehydroquinate = 3-dehydroshikimate + H2O. The protein operates within metabolic intermediate biosynthesis; chorismate biosynthesis; chorismate from D-erythrose 4-phosphate and phosphoenolpyruvate: step 3/7. Functionally, involved in the third step of the chorismate pathway, which leads to the biosynthesis of aromatic amino acids. Catalyzes the cis-dehydration of 3-dehydroquinate (DHQ) and introduces the first double bond of the aromatic ring to yield 3-dehydroshikimate. This is 3-dehydroquinate dehydratase from Staphylococcus aureus (strain Mu3 / ATCC 700698).